We begin with the raw amino-acid sequence, 233 residues long: Ion-translocating oxidoreductase complex subunit E (233 aa).

The next 5 membrane-spanning stretches (helical) occupy residues 22–42 (LLGL…LGLG), 69–89 (IPIY…LINA), 93–113 (GLYQ…IVVG), 128–148 (ALDG…LGSI), and 182–202 (PMLL…LLAA).

The protein belongs to the NqrDE/RnfAE family. The complex is composed of six subunits: RnfA, RnfB, RnfC, RnfD, RnfE and RnfG.

The protein localises to the cell inner membrane. Its function is as follows. Part of a membrane-bound complex that couples electron transfer with translocation of ions across the membrane. The chain is Ion-translocating oxidoreductase complex subunit E from Erwinia tasmaniensis (strain DSM 17950 / CFBP 7177 / CIP 109463 / NCPPB 4357 / Et1/99).